The following is a 124-amino-acid chain: Small ribosomal subunit protein uS12 (124 aa).

At Asp-89 the chain carries 3-methylthioaspartic acid.

Belongs to the universal ribosomal protein uS12 family. As to quaternary structure, part of the 30S ribosomal subunit. Contacts proteins S8 and S17. May interact with IF1 in the 30S initiation complex.

Its function is as follows. With S4 and S5 plays an important role in translational accuracy. Functionally, interacts with and stabilizes bases of the 16S rRNA that are involved in tRNA selection in the A site and with the mRNA backbone. Located at the interface of the 30S and 50S subunits, it traverses the body of the 30S subunit contacting proteins on the other side and probably holding the rRNA structure together. The combined cluster of proteins S8, S12 and S17 appears to hold together the shoulder and platform of the 30S subunit. The protein is Small ribosomal subunit protein uS12 of Thermoanaerobacter pseudethanolicus (strain ATCC 33223 / 39E) (Clostridium thermohydrosulfuricum).